A 147-amino-acid polypeptide reads, in one-letter code: uncharacterized protein (147 aa).

Belongs to the RTX toxin acyltransferase family.

This is an uncharacterized protein from Synechocystis sp. (strain ATCC 27184 / PCC 6803 / Kazusa).